The sequence spans 456 residues: Arginine biosynthesis bifunctional protein ArgJ, mitochondrial (456 aa).

The substrate site is built by Thr184, Lys213, Thr224, Glu311, Asn451, and Thr456. Thr224 (nucleophile) is an active-site residue.

Belongs to the ArgJ family. Heterodimer of an alpha and a beta chain. The alpha and beta chains are autoproteolytically processed from a single precursor protein within the mitochondrion.

It is found in the mitochondrion matrix. The enzyme catalyses N(2)-acetyl-L-ornithine + L-glutamate = N-acetyl-L-glutamate + L-ornithine. The catalysed reaction is L-glutamate + acetyl-CoA = N-acetyl-L-glutamate + CoA + H(+). It functions in the pathway amino-acid biosynthesis; L-arginine biosynthesis; L-ornithine and N-acetyl-L-glutamate from L-glutamate and N(2)-acetyl-L-ornithine (cyclic): step 1/1. It participates in amino-acid biosynthesis; L-arginine biosynthesis; N(2)-acetyl-L-ornithine from L-glutamate: step 1/4. Its function is as follows. Catalyzes two activities which are involved in the cyclic version of arginine biosynthesis: the synthesis of acetylglutamate from glutamate and acetyl-CoA, and of ornithine by transacetylation between acetylornithine and glutamate. This is Arginine biosynthesis bifunctional protein ArgJ, mitochondrial from Neosartorya fischeri (strain ATCC 1020 / DSM 3700 / CBS 544.65 / FGSC A1164 / JCM 1740 / NRRL 181 / WB 181) (Aspergillus fischerianus).